Here is a 343-residue protein sequence, read N- to C-terminus: Zinc finger protein STP3 (343 aa).

2 disordered regions span residues 31–56 (YNGE…SGSA) and 71–140 (SNDV…KPRK). Residues 33–45 (GEASSASTHPTLP) show a composition bias toward polar residues. Low complexity-rich tracts occupy residues 46 to 56 (NMNISNGSGSA), 71 to 86 (SNDV…FLPS), and 94 to 120 (SASA…AGPS). 2 positions are modified to phosphoserine: Ser-71 and Ser-111. The C2H2-type zinc finger occupies 169–191 (HKCPICHRGFARNNDLLRHKKRH). A disordered region spans residues 198-222 (SQSGVLSNHNDGKGGSVSPNDDDTH).

The protein localises to the nucleus. This is Zinc finger protein STP3 (STP3) from Saccharomyces cerevisiae (strain ATCC 204508 / S288c) (Baker's yeast).